The sequence spans 138 residues: Large ribosomal subunit protein uL16 (138 aa).

It belongs to the universal ribosomal protein uL16 family. Part of the 50S ribosomal subunit.

In terms of biological role, binds 23S rRNA and is also seen to make contacts with the A and possibly P site tRNAs. The chain is Large ribosomal subunit protein uL16 from Anaeromyxobacter sp. (strain Fw109-5).